Consider the following 181-residue polypeptide: ABC transporter E family member 3 (181 aa).

Residues 20-176 (SQIIVMLGEN…KAAFARFHNG (157 aa)) enclose the ABC transporter domain. 27–34 (GENGTGKT) contacts ATP.

The protein belongs to the ABC transporter superfamily. ABCE family. In terms of tissue distribution, mostly expressed in roots and leaves, and, to a lower extent, in stems, flowers and siliques.

This Arabidopsis thaliana (Mouse-ear cress) protein is ABC transporter E family member 3 (ABCE3).